An 826-amino-acid chain; its full sequence is Breast cancer anti-estrogen resistance protein 3 homolog (826 aa).

Ala-2 carries the post-translational modification N-acetylalanine. Ser-32, Ser-78, Ser-83, and Ser-182 each carry phosphoserine. Positions 46-81 are disordered; sequence SIHGTLPRKKKGPPPIRSCDNFSHVGTLPHSRSPRH. Residues 154-253 form the SH2 domain; it reads WYHGRIPRQV…QSGAIIFQPV (100 aa). Residues 268-287 are disordered; the sequence is ASSPDRAHEGSLTEGRPDAA. At Ser-291 the chain carries Phosphoserine. The disordered stretch occupies residues 294 to 321; the sequence is VGGTQAREQGLPRGNLLRNKEKSGSQPA. An N6-methyllysine modification is found at Lys-335. Residues 348 to 406 are disordered; the sequence is KLTPQSPSVGTSPCPNSPVFRTGSEPTLSPAVVRRVSSDARPGEALRGSDSQLCPKPPP. Positions 350–361 are enriched in polar residues; the sequence is TPQSPSVGTSPC. 4 positions are modified to phosphoserine: Ser-359, Ser-364, Ser-376, and Ser-472. Residues 480 to 501 form a disordered region; it reads DDDDRTRPWKPPPAPGDTVGED. Residues 549–819 form the Ras-GEF domain; that stretch reads DPKVIAQHLL…TALSRKLEPP (271 aa). The interval 745-749 is mediates the interaction with BCAR1/p130CAS; it reads LATAR.

In terms of assembly, part of a complex comprised of PTPRA, BCAR1, BCAR3 (via SH2 domain) and SRC; the formation of the complex is dependent on integrin mediated-tyrosine phosphorylation of PTPRA. Within the complex, interacts (via SH2 domain) with PTPRA (when phosphorylated on 'Tyr-797'). Interacts (via Ras-GEF domain) with BCAR1. Interacts (via Ras-GEF domain) with NEDD9. Interacts with PTK2/FAK1. Interacts with PTPN1. Interacts (via SH2 domain) with EGFR (when tyrosine-phosphorylated). In terms of processing, phosphorylated on tyrosine residues.

The protein localises to the cytoplasm. Its subcellular location is the cell junction. The protein resides in the focal adhesion. Its function is as follows. Acts as an adapter protein downstream of several growth factor receptors to promote cell proliferation, migration, and redistribution of actin fibers. Specifically involved in INS/insulin signaling pathway by mediating MAPK1/ERK2-MAPK3/ERK1 activation and DNA synthesis. Promotes insulin-mediated membrane ruffling. In response to vasoconstrictor peptide EDN1, involved in the activation of RAP1 downstream of PTK2B via interaction with phosphorylated BCAR1. Inhibits cell migration and invasion via regulation of TGFB-mediated matrix digestion, actin filament rearrangement, and inhibition of invadopodia activity. May inhibit TGFB-SMAD signaling, via facilitating BCAR1 and SMAD2 and/or SMAD3 interaction. Regulates EGF-induced DNA synthesis. Required for the maintenance of ocular lens morphology and structural integrity, potentially via regulation of focal adhesion complex signaling. Acts upstream of PTPRA to regulate the localization of BCAR1 and PTPRA to focal adhesions, via regulation of SRC-mediated phosphorylation of PTPRA. Positively regulates integrin-induced tyrosine phosphorylation of BCAR1. Acts as a guanine nucleotide exchange factor (GEF) for small GTPases RALA, RAP1A and RRAS. However, in a contrasting study, lacks GEF activity towards RAP1. In Bos taurus (Bovine), this protein is Breast cancer anti-estrogen resistance protein 3 homolog (BCAR3).